Reading from the N-terminus, the 24-residue chain is Brevinin-1E (24 aa).

Cysteine 18 and cysteine 24 are oxidised to a cystine.

As to expression, expressed by the skin glands.

The protein localises to the secreted. In terms of biological role, antimicrobial peptide. Stimulates insulin release by BRIN-BD11 cells in vitro. This is Brevinin-1E from Pelophylax saharicus (Sahara frog).